The sequence spans 73 residues: NAD(P)H-quinone oxidoreductase subunit L (73 aa).

The next 2 membrane-spanning stretches (helical) occupy residues 6–26 (SLIGLTYAGLAVLYLLVLPLL) and 44–64 (VLMFFLVLFFFPGMVLLAPFM).

The protein belongs to the complex I NdhL subunit family. In terms of assembly, NDH-1 can be composed of about 15 different subunits; different subcomplexes with different compositions have been identified which probably have different functions.

Its subcellular location is the cellular thylakoid membrane. It catalyses the reaction a plastoquinone + NADH + (n+1) H(+)(in) = a plastoquinol + NAD(+) + n H(+)(out). It carries out the reaction a plastoquinone + NADPH + (n+1) H(+)(in) = a plastoquinol + NADP(+) + n H(+)(out). NDH-1 shuttles electrons from an unknown electron donor, via FMN and iron-sulfur (Fe-S) centers, to quinones in the respiratory and/or the photosynthetic chain. The immediate electron acceptor for the enzyme in this species is believed to be plastoquinone. Couples the redox reaction to proton translocation, and thus conserves the redox energy in a proton gradient. Cyanobacterial NDH-1 also plays a role in inorganic carbon-concentration. This chain is NAD(P)H-quinone oxidoreductase subunit L, found in Synechococcus sp. (strain JA-2-3B'a(2-13)) (Cyanobacteria bacterium Yellowstone B-Prime).